Reading from the N-terminus, the 315-residue chain is 4-hydroxy-3-methylbut-2-enyl diphosphate reductase (315 aa).

Residue Cys12 coordinates [4Fe-4S] cluster. Residues His41 and His74 each coordinate (2E)-4-hydroxy-3-methylbut-2-enyl diphosphate. Positions 41 and 74 each coordinate dimethylallyl diphosphate. Residues His41 and His74 each contribute to the isopentenyl diphosphate site. Position 96 (Cys96) interacts with [4Fe-4S] cluster. Residue His124 coordinates (2E)-4-hydroxy-3-methylbut-2-enyl diphosphate. His124 contacts dimethylallyl diphosphate. Residue His124 coordinates isopentenyl diphosphate. Residue Glu126 is the Proton donor of the active site. Thr168 is a (2E)-4-hydroxy-3-methylbut-2-enyl diphosphate binding site. Cys198 contributes to the [4Fe-4S] cluster binding site. (2E)-4-hydroxy-3-methylbut-2-enyl diphosphate is bound by residues Ser226, Ser227, Asn228, and Ser270. Residues Ser226, Ser227, Asn228, and Ser270 each coordinate dimethylallyl diphosphate. Isopentenyl diphosphate contacts are provided by Ser226, Ser227, Asn228, and Ser270.

This sequence belongs to the IspH family. [4Fe-4S] cluster serves as cofactor.

It catalyses the reaction isopentenyl diphosphate + 2 oxidized [2Fe-2S]-[ferredoxin] + H2O = (2E)-4-hydroxy-3-methylbut-2-enyl diphosphate + 2 reduced [2Fe-2S]-[ferredoxin] + 2 H(+). The enzyme catalyses dimethylallyl diphosphate + 2 oxidized [2Fe-2S]-[ferredoxin] + H2O = (2E)-4-hydroxy-3-methylbut-2-enyl diphosphate + 2 reduced [2Fe-2S]-[ferredoxin] + 2 H(+). It functions in the pathway isoprenoid biosynthesis; dimethylallyl diphosphate biosynthesis; dimethylallyl diphosphate from (2E)-4-hydroxy-3-methylbutenyl diphosphate: step 1/1. It participates in isoprenoid biosynthesis; isopentenyl diphosphate biosynthesis via DXP pathway; isopentenyl diphosphate from 1-deoxy-D-xylulose 5-phosphate: step 6/6. In terms of biological role, catalyzes the conversion of 1-hydroxy-2-methyl-2-(E)-butenyl 4-diphosphate (HMBPP) into a mixture of isopentenyl diphosphate (IPP) and dimethylallyl diphosphate (DMAPP). Acts in the terminal step of the DOXP/MEP pathway for isoprenoid precursor biosynthesis. This is 4-hydroxy-3-methylbut-2-enyl diphosphate reductase from Pseudomonas syringae pv. syringae (strain B728a).